The following is a 675-amino-acid chain: UvrABC system protein B (675 aa).

A Helicase ATP-binding domain is found at 32–417 (EGLSDGLAYQ…EHAGQVVEQV (386 aa)). Position 45 to 52 (45 to 52 (GVTGSGKT)) interacts with ATP. The Beta-hairpin signature appears at 98–121 (YYDYYQPEAYVPSRDLFIEKDSAI). The Helicase C-terminal domain maps to 436-602 (QVDDLMSEIN…QIKKQVKDII (167 aa)). In terms of domain architecture, UVR spans 634–669 (IKEIAKLEKAMQQAARDLQFEEAAVLRDRIRDIKEN).

This sequence belongs to the UvrB family. In terms of assembly, forms a heterotetramer with UvrA during the search for lesions. Interacts with UvrC in an incision complex.

It is found in the cytoplasm. In terms of biological role, the UvrABC repair system catalyzes the recognition and processing of DNA lesions. A damage recognition complex composed of 2 UvrA and 2 UvrB subunits scans DNA for abnormalities. Upon binding of the UvrA(2)B(2) complex to a putative damaged site, the DNA wraps around one UvrB monomer. DNA wrap is dependent on ATP binding by UvrB and probably causes local melting of the DNA helix, facilitating insertion of UvrB beta-hairpin between the DNA strands. Then UvrB probes one DNA strand for the presence of a lesion. If a lesion is found the UvrA subunits dissociate and the UvrB-DNA preincision complex is formed. This complex is subsequently bound by UvrC and the second UvrB is released. If no lesion is found, the DNA wraps around the other UvrB subunit that will check the other stand for damage. The chain is UvrABC system protein B from Neisseria meningitidis serogroup B (strain ATCC BAA-335 / MC58).